A 551-amino-acid chain; its full sequence is uncharacterized protein (551 aa).

Residues 1-36 constitute a mitochondrion transit peptide; it reads MMALVRDRRAHYVMSIVIRWVHCFSSSLRGTFGTRW. Residues 203 to 315 are a coiled coil; it reads TNILLRKLKE…MDSRDRLREE (113 aa). Residues 354–389 are disordered; the sequence is REASLSPWPKSPPSTTALRPHSATMSVSSAGAQKAK. A compositionally biased stretch (polar residues) spans 366–384; the sequence is PSTTALRPHSATMSVSSAG. The stretch at 405–439 forms a coiled coil; that stretch reads KHGLESQIEALKANLENEKKKVERFRKEADRLNKS. The interval 519–551 is disordered; sequence LQLSPKGKLSESPKEESLEEPSMRQSSPAETVD. A compositionally biased stretch (polar residues) spans 541-551; sequence MRQSSPAETVD.

In terms of assembly, interacts with NOD2.

The protein resides in the mitochondrion. This is an uncharacterized protein from Homo sapiens (Human).